A 189-amino-acid polypeptide reads, in one-letter code: MASNESGGGNLMDEFEEAFQSCLLTLTKQEPNSGTNKEEIDLEVQKTTNRFIDVARQMEAFFLQKRFLVSTLKPYMLIKDENQDLSIEIQRKEALLQKHYNRLEEWKACLSDIQQGVHSRPTPPIGSGMLQGPGGGMPPMGGTPPRPGMMPGMPPGAMQPGGPMQPSPHMLQAQQMQQLRMISRQMPPK.

Residues 75-115 (YMLIKDENQDLSIEIQRKEALLQKHYNRLEEWKACLSDIQQ) adopt a coiled-coil conformation. The disordered stretch occupies residues 124 to 147 (PIGSGMLQGPGGGMPPMGGTPPRP). Over residues 129–139 (MLQGPGGGMPP) the composition is skewed to gly residues.

The protein belongs to the Mediator complex subunit 28 family. As to quaternary structure, component of the Mediator complex, which includes at least CDK8, MED4, MED6, MED11, MED14, MED17, MED18, MED20, MED21, MED22, MED27, MED28, MED30 and MED31.

It localises to the nucleus. Its function is as follows. Component of the Mediator complex, a coactivator involved in the regulated transcription of nearly all RNA polymerase II-dependent genes. Mediator functions as a bridge to convey information from gene-specific regulatory proteins to the basal RNA polymerase II transcription machinery. Mediator is recruited to promoters by direct interactions with regulatory proteins and serves as a scaffold for the assembly of a functional preinitiation complex with RNA polymerase II and the general transcription factors. The sequence is that of Mediator of RNA polymerase II transcription subunit 28 (MED28) from Drosophila melanogaster (Fruit fly).